The primary structure comprises 892 residues: E3 ubiquitin ligase PQT3-like (892 aa).

Residues 3–76 (IYYKFKSARD…NTSVLIRRVP (74 aa)) enclose the DWNN domain. The CCHC-type zinc-finger motif lies at 210–224 (CHRCNIPGHFIQHCP). Ser-285 is subject to Phosphoserine. Residues 295 to 333 (CPLCKEVMKDAALTSKCCYKSFCDKCIRDHIISKSMCVC) form an RING-type; degenerate zinc finger. 3 disordered regions span residues 375–408 (DLESARCPPPKALSPTTSVASKGEKKPVLSNNND), 459–493 (TQAPKEEMQQQVAAGEPGKKKKKKPRVPGNDMQWN), and 623–892 (MLRK…RSRA). Ser-404 carries the post-translational modification Phosphoserine. The segment covering 623-644 (MLRKRENERRPEGGKMFRDGEN) has biased composition (basic and acidic residues). The span at 647–666 (MMMNNGTSASASSINPNKSR) shows a compositional bias: polar residues. A compositionally biased stretch (basic and acidic residues) spans 674–692 (HDYDRRRRPEKRLSPEHPP). The Nuclear localization signal motif lies at 693–700 (TRKNISPS). Residues 708–745 (ERYPDERDRQRDRERSRHQDVDREHDRTRDRRDEDRSR) show a composition bias toward basic and acidic residues. Low complexity predominate over residues 810-832 (SSSSTSVTDPSASASAAAAVGTS). Ser-866 carries the phosphoserine modification. Over residues 875-892 (SEDKLRYSKRGKGERSRA) the composition is skewed to basic and acidic residues.

Its subcellular location is the nucleus. The catalysed reaction is S-ubiquitinyl-[E2 ubiquitin-conjugating enzyme]-L-cysteine + [acceptor protein]-L-lysine = [E2 ubiquitin-conjugating enzyme]-L-cysteine + N(6)-ubiquitinyl-[acceptor protein]-L-lysine.. This is E3 ubiquitin ligase PQT3-like from Arabidopsis thaliana (Mouse-ear cress).